We begin with the raw amino-acid sequence, 66 residues long: Beta-toxin Chui2 (66 aa).

Residues 1-66 enclose the LCN-type CS-alpha/beta domain; sequence KEGYIVNSYT…VWPLKNKTCN (66 aa). 4 cysteine pairs are disulfide-bonded: cysteine 12–cysteine 65, cysteine 16–cysteine 41, cysteine 25–cysteine 46, and cysteine 29–cysteine 48. The residue at position 66 (asparagine 66) is an Asparagine amide.

It belongs to the long (4 C-C) scorpion toxin superfamily. Sodium channel inhibitor family. Beta subfamily. As to expression, expressed by the venom gland.

It localises to the secreted. Beta toxins bind voltage-independently at site-4 of sodium channels (Nav) and shift the voltage of activation toward more negative potentials thereby affecting sodium channel activation and promoting spontaneous and repetitive firing. This Centruroides huichol (Scorpion) protein is Beta-toxin Chui2.